A 483-amino-acid chain; its full sequence is UDP-N-acetylmuramoyl-L-alanyl-D-glutamate--L-lysine ligase (483 aa).

Ser-44 is a UDP-N-acetyl-alpha-D-muramoyl-L-alanyl-D-glutamate binding site. 120-126 (GTKGKTT) lines the ATP pocket. Residues 162-163 (TT), Ser-189, and Arg-197 each bind UDP-N-acetyl-alpha-D-muramoyl-L-alanyl-D-glutamate. An N6-carboxylysine modification is found at Lys-231. Positions 406–409 (DDPN) match the L-lysine recognition motif motif.

This sequence belongs to the MurCDEF family. MurE subfamily. Post-translationally, carboxylation is probably crucial for Mg(2+) binding and, consequently, for the gamma-phosphate positioning of ATP.

The protein localises to the cytoplasm. It carries out the reaction UDP-N-acetyl-alpha-D-muramoyl-L-alanyl-D-glutamate + L-lysine + ATP = UDP-N-acetyl-alpha-D-muramoyl-L-alanyl-gamma-D-glutamyl-L-lysine + ADP + phosphate + H(+). It functions in the pathway cell wall biogenesis; peptidoglycan biosynthesis. Its function is as follows. Catalyzes the addition of L-lysine to the nucleotide precursor UDP-N-acetylmuramoyl-L-alanyl-D-glutamate (UMAG) in the biosynthesis of bacterial cell-wall peptidoglycan. In Streptococcus mutans serotype c (strain ATCC 700610 / UA159), this protein is UDP-N-acetylmuramoyl-L-alanyl-D-glutamate--L-lysine ligase.